We begin with the raw amino-acid sequence, 75 residues long: UPF0270 protein PP_1747 (75 aa).

It belongs to the UPF0270 family.

This is UPF0270 protein PP_1747 from Pseudomonas putida (strain ATCC 47054 / DSM 6125 / CFBP 8728 / NCIMB 11950 / KT2440).